The following is a 266-amino-acid chain: Putative carbamate hydrolase RutD (266 aa).

In terms of domain architecture, AB hydrolase-1 spans 14–238 (PVVVLSAGLG…RVEMPWGGHA (225 aa)).

This sequence belongs to the AB hydrolase superfamily. Hydrolase RutD family.

The catalysed reaction is carbamate + 2 H(+) = NH4(+) + CO2. Its function is as follows. Involved in pyrimidine catabolism. May facilitate the hydrolysis of carbamate, a reaction that can also occur spontaneously. The protein is Putative carbamate hydrolase RutD of Klebsiella pneumoniae (strain 342).